A 272-amino-acid chain; its full sequence is MGKNNPFVHSNANFPPLQTHNFEDIPEKGYTIFSSPRIDVFNEERPHSGINLNQYQHHEDDAELQSNNPFLNKDSGVDLLKLHSRSNSRIYEAKPKRVIKPKIAIIECNEMAENPPFWNQNKAFERKVSSKESFNMLGYDKIDKLDSSNSYLGDFGVHHDGPFDPCSKHRNLDAATSPIAAFSSQSEANSLPAFLLPNNSKGVEKSEENEDGVTDNDSSNVNSSTNESPNPTDINVCSNDDATDNTENNLKKKASFIYRLRKHLKRNSIETE.

The disordered stretch occupies residues 193–250; sequence AFLLPNNSKGVEKSEENEDGVTDNDSSNVNSSTNESPNPTDINVCSNDDATDNTENNL. The segment covering 215–233 has biased composition (low complexity); sequence DNDSSNVNSSTNESPNPTD. Positions 235 to 248 are enriched in polar residues; the sequence is NVCSNDDATDNTEN.

The protein belongs to the pal1 family.

The protein resides in the cytoplasm. It localises to the nucleus. This is an uncharacterized protein from Schizosaccharomyces pombe (strain 972 / ATCC 24843) (Fission yeast).